A 254-amino-acid polypeptide reads, in one-letter code: Probable WRKY transcription factor 67 (254 aa).

The WRKY DNA-binding region spans 102–170; the sequence is SRTMCPNDGF…YLGKHVCKAF (69 aa).

The protein belongs to the WRKY group III family.

The protein localises to the nucleus. In terms of biological role, transcription factor. Interacts specifically with the W box (5'-(T)TGAC[CT]-3'), a frequently occurring elicitor-responsive cis-acting element. The protein is Probable WRKY transcription factor 67 (WRKY67) of Arabidopsis thaliana (Mouse-ear cress).